The following is a 1006-amino-acid chain: SAC3 family protein A (1006 aa).

Disordered regions lie at residues 1–75 (MNHG…GPAT), 106–162 (TPYQ…PGSY), 183–239 (GYQS…TIAT), 266–326 (GTEK…AVST), 516–550 (TVTTTNVTNSESSSAQLSSLQNKSPTRRPKSRWEP), 595–638 (GFKP…SDKD), and 650–690 (AGSA…GNLH). Composition is skewed to polar residues over residues 26-75 (GSQT…GPAT) and 106-115 (TPYQTSSDPH). Residues 116–140 (NYSNTGYSNYYSGYQQQPSQSYPQP) show a composition bias toward low complexity. Residues 144–162 (YQNTGAPQPLSSFQNPGSY) show a composition bias toward polar residues. Composition is skewed to polar residues over residues 269-282 (KLSTPTTSAYSQSF) and 313-326 (SHPPSQQPGAAVST). Residues 516–539 (TVTTTNVTNSESSSAQLSSLQNKS) show a composition bias toward low complexity. A compositionally biased stretch (basic residues) spans 609–618 (SFQRPVKRQR). A compositionally biased stretch (basic and acidic residues) spans 653 to 680 (AEEKKRRDSRSKRFEKIQGHSRGNDLTK). The 175-residue stretch at 804-978 (DLPEYNQCLS…DMLLDTKATS (175 aa)) folds into the PCI domain.

The protein belongs to the SAC3 family. Interacts with EER5, SAC3B and CML20.

The protein localises to the nucleus. Its function is as follows. Component of the TREX-2 complex (transcription and export complex 2), a muliprotein complex that functions in docking export-competent ribonucleoprotein particles (mRNPs) to the nuclear entrance of the nuclear pore complex (nuclear basket). TREX-2 participates in mRNA export and accurate chromatin positioning in the nucleus by tethering genes to the nuclear periphery. This Arabidopsis thaliana (Mouse-ear cress) protein is SAC3 family protein A.